The chain runs to 138 residues: MMIWKRHLTLAELNATSQNTMVAHLGIVYTRLGDDVLEAEMPVDSRTHQPFGLLHGGASAALAETLGSMAGFLLTRDGQCVVGTELNATHHRPVSQGKVRGVCQPLHLGRQSQSWEIVVFDEQGRRCCTCRLGTAVIG.

Glu64 (nucleophile or proton acceptor) is an active-site residue.

Belongs to the thioesterase PaaI family. As to quaternary structure, homotetramer. Dimer of dimers. Interacts specifically with the aryl carrier protein (ArCP) domain of EntB.

Its subcellular location is the cytoplasm. It functions in the pathway siderophore biosynthesis; enterobactin biosynthesis. Its function is as follows. Required for optimal enterobactin synthesis. Acts as a proofreading enzyme that prevents EntB misacylation by hydrolyzing the thioester bound existing between EntB and wrongly charged molecules. This chain is Proofreading thioesterase EntH, found in Citrobacter rodentium (strain ICC168) (Citrobacter freundii biotype 4280).